Reading from the N-terminus, the 160-residue chain is Small ribosomal subunit protein uS7 (160 aa).

Belongs to the universal ribosomal protein uS7 family. As to quaternary structure, part of the 30S ribosomal subunit. Contacts proteins S9 and S11.

Its function is as follows. One of the primary rRNA binding proteins, it binds directly to 16S rRNA where it nucleates assembly of the head domain of the 30S subunit. Is located at the subunit interface close to the decoding center, probably blocks exit of the E-site tRNA. This Ehrlichia ruminantium (strain Gardel) protein is Small ribosomal subunit protein uS7.